The sequence spans 361 residues: Peptide chain release factor 1 (361 aa).

Gln-237 bears the N5-methylglutamine mark.

It belongs to the prokaryotic/mitochondrial release factor family. Methylated by PrmC. Methylation increases the termination efficiency of RF1.

It localises to the cytoplasm. Its function is as follows. Peptide chain release factor 1 directs the termination of translation in response to the peptide chain termination codons UAG and UAA. The chain is Peptide chain release factor 1 from Thioalkalivibrio sulfidiphilus (strain HL-EbGR7).